The sequence spans 178 residues: Probetacellulin (178 aa).

The first 31 residues, 1–31 (MDRAARCSGASSLPLLLALALGLVILHCVVA), serve as a signal peptide directing secretion. The Extracellular segment spans residues 32–118 (DGNSTRSPET…LFYLRGDRGQ (87 aa)). Asn34 carries N-linked (GlcNAc...) asparagine glycosylation. Positions 65-105 (HFSRCPKQYKHYCIKGRCRFVVAEQTPSCVCDEGYIGARCE) constitute an EGF-like domain. Cystine bridges form between Cys69–Cys82, Cys77–Cys93, and Cys95–Cys104. The propeptide at 112-178 (LRGDRGQILV…NEDIEETNIA (67 aa)) is removed in mature form. A helical transmembrane segment spans residues 119-139 (ILVICLIAVMVVFIILVIGVC). Residues 140–178 (TCCHPLRKRRKRKKKEEEMETLGKDITPINEDIEETNIA) are Cytoplasmic-facing.

As to quaternary structure, monomer. Interacts with EGFR and ERBB4. As to expression, synthesized in several tissues and tumor cells. Predominantly expressed in pancreas and small intestine.

The protein resides in the secreted. It localises to the extracellular space. The protein localises to the cell membrane. Its function is as follows. Growth factor that binds to EGFR, ERBB4 and other EGF receptor family members. Potent mitogen for retinal pigment epithelial cells and vascular smooth muscle cells. This Homo sapiens (Human) protein is Probetacellulin (BTC).